The following is a 457-amino-acid chain: UDP-N-acetylmuramate--L-alanine ligase (457 aa).

109–115 (GTDGKTT) serves as a coordination point for ATP.

The protein belongs to the MurCDEF family.

The protein localises to the cytoplasm. The enzyme catalyses UDP-N-acetyl-alpha-D-muramate + L-alanine + ATP = UDP-N-acetyl-alpha-D-muramoyl-L-alanine + ADP + phosphate + H(+). The protein operates within cell wall biogenesis; peptidoglycan biosynthesis. Cell wall formation. In Thermotoga petrophila (strain ATCC BAA-488 / DSM 13995 / JCM 10881 / RKU-1), this protein is UDP-N-acetylmuramate--L-alanine ligase.